The following is a 287-amino-acid chain: Oxaloacetate decarboxylase (287 aa).

Residue Ser-50 participates in substrate binding. Asp-88 lines the Mg(2+) pocket. Substrate contacts are provided by Arg-159 and His-235.

The protein belongs to the isocitrate lyase/PEP mutase superfamily. Oxaloacetate decarboxylase family. Homotetramer; dimer of dimers. The cofactor is Mg(2+).

The enzyme catalyses oxaloacetate + H(+) = pyruvate + CO2. Its function is as follows. Catalyzes the decarboxylation of oxaloacetate into pyruvate. Seems to play a role in maintaining cellular concentrations of bicarbonate and pyruvate. This chain is Oxaloacetate decarboxylase, found in Pseudomonas paraeruginosa (strain DSM 24068 / PA7) (Pseudomonas aeruginosa (strain PA7)).